A 204-amino-acid chain; its full sequence is ATP synthase subunit 4, mitochondrial (204 aa).

2 consecutive transmembrane segments (helical) span residues Gly-27–Val-47 and Ile-52–Tyr-72.

In terms of assembly, F-type ATP synthases have 2 components, the catalytic core F(1) and the membrane-embedded component F(0), linked together by a central stalk and a peripheral stalk. The central stalk, also called rotor shaft, is often seen as part of F(1). The peripheral stalk is seen as part of F(0). F(0) contains the membrane channel next to the rotor. F-type ATP synthases form dimers but each monomer functions independently in ATP generation. The dimer consists of 18 different polypeptides: ATP1 (subunit alpha, part of F(1), 3 molecules per monomer), ATP2 (subunit beta, part of F(1), 3 molecules per monomer), ATP3 (subunit gamma, part of the central stalk), ATP4 (subunit b, part of the peripheral stalk), ATP5/OSCP (subunit 5/OSCP, part of the peripheral stalk), ATP6 (subunit a, part of the peripheral stalk), ATP7 (subunit d, part of the peripheral stalk), ATP8 (subunit 8, part of the peripheral stalk), OLI1 (subunit c, part of the rotor, 10 molecules per monomer), ATP14 (subunit h, part of the peripheral stalk), ATP15 (subunit epsilon, part of the central stalk), ATP16 (subunit delta, part of the central stalk), ATP17 (subunit f, part of the peripheral stalk), ATP18 (subunit i/j, part of the peripheral stalk). Dimer-specific subunits are ATP19 (subunit k, at interface between monomers), ATP20 (subunit g, at interface between monomers), TIM11 (subunit e, at interface between monomers). Also contains subunit L.

It localises to the mitochondrion inner membrane. Mitochondrial membrane ATP synthase (F(1)F(0) ATP synthase or Complex V) produces ATP from ADP in the presence of a proton gradient across the membrane which is generated by electron transport complexes of the respiratory chain. F-type ATP synthases consist of two structural domains, F(1) - containing the extramembraneous catalytic core, and F(0) - containing the membrane proton channel, linked together by a central stalk and a peripheral stalk. During catalysis, ATP synthesis in the catalytic domain of F(1) is coupled via a rotary mechanism of the central stalk subunits to proton translocation. Part of the complex F(0) domain and the peripheral stalk, which acts as a stator to hold the catalytic alpha/ATP1(3)beta/ATP2(3) subcomplex and subunit a/ATP6 static relative to the rotary elements. The polypeptide is ATP synthase subunit 4, mitochondrial (Pichia angusta (Yeast)).